The following is a 130-amino-acid chain: Large ribosomal subunit protein bL17 (130 aa).

This sequence belongs to the bacterial ribosomal protein bL17 family. In terms of assembly, part of the 50S ribosomal subunit. Contacts protein L32.

The polypeptide is Large ribosomal subunit protein bL17 (Buchnera aphidicola subsp. Acyrthosiphon pisum (strain APS) (Acyrthosiphon pisum symbiotic bacterium)).